The sequence spans 555 residues: Glucose-6-phosphate isomerase (555 aa).

D-glucose 6-phosphate contacts are provided by residues 169 to 170, 219 to 224, glutamine 364, glutamate 368, histidine 399, and lysine 521; these read GS and SKTFTT. Glutamate 368 serves as the catalytic Proton donor. Residues histidine 399 and lysine 521 contribute to the active site.

Belongs to the GPI family. Homodimer.

Its subcellular location is the cytoplasm. It localises to the cytosol. The catalysed reaction is alpha-D-glucose 6-phosphate = beta-D-fructose 6-phosphate. The protein operates within carbohydrate degradation; glycolysis; D-glyceraldehyde 3-phosphate and glycerone phosphate from D-glucose: step 2/4. Its function is as follows. In the cytoplasm, catalyzes the conversion of glucose-6-phosphate to fructose-6-phosphate, the second step in glycolysis, and the reverse reaction during gluconeogenesis. In Eremothecium gossypii (strain ATCC 10895 / CBS 109.51 / FGSC 9923 / NRRL Y-1056) (Yeast), this protein is Glucose-6-phosphate isomerase (PGI1).